Consider the following 1015-residue polypeptide: Collagen alpha-2(I) chain (1015 aa).

The interval 1 to 1015 (SGGFDFSFLP…FGYEGDFYRA (1015 aa)) is disordered. 4-hydroxyproline occurs at positions 10 and 13. Gly residues predominate over residues 20–30 (KGVGLGPGPMG). Proline 38 is modified (4-hydroxyproline). A compositionally biased stretch (low complexity) spans 43-69 (QGPAGEPGEPGQTGPAGARGPAGPPGK). A compositionally biased stretch (basic and acidic residues) spans 70-84 (AGEDGHPGKPGRPGE). A 5-hydroxylysine; alternate modification is found at lysine 106. A glycan (O-linked (Gal...) hydroxylysine; alternate) is linked at lysine 106. Composition is skewed to low complexity over residues 140-169 (VGAP…SAGP), 194-208 (AGPR…VSGP), and 235-250 (PGPV…RGLV). Residues 302 to 311 (GLRGGPGSRG) show a composition bias toward gly residues. Residues 324–340 (PAGSRGASGPAGVRGPS) are compositionally biased toward low complexity. 4-hydroxyproline occurs at positions 346 and 349. Over residues 441-450 (GVQGGKGEQG) the composition is skewed to gly residues. Positions 497–514 (PGESGAAGPVGPIGSRGP) are enriched in low complexity. Positions 534-545 (GTAGPGSGGLPG) are enriched in gly residues. Low complexity-rich tracts occupy residues 568–612 (VGTT…PRGS) and 619–639 (VGPA…QPGA). A compositionally biased stretch (basic and acidic residues) spans 640–649 (KGERGTKGPK). Low complexity predominate over residues 657–670 (PTGPVGAAGPSGPN). Over residues 674 to 686 (GPAGGRGDGGPPG) the composition is skewed to gly residues. Over residues 687 to 697 (LTGFPGAAGRT) the composition is skewed to low complexity. Gly residues predominate over residues 734 to 743 (GETGAGGPPG). Composition is skewed to low complexity over residues 751–778 (SGEP…LGLP), 786–799 (LPGV…PGPL), 846–868 (YAGN…VGPA), and 877–897 (PGPA…PSGP). Basic and acidic residues predominate over residues 901 to 912 (RGDKGEAGDKGP). Residues 987–997 (PAGPPGPPGPP) are compositionally biased toward pro residues.

This sequence belongs to the fibrillar collagen family. In terms of assembly, trimers of one alpha 2(I) and two alpha 1(I) chains. Interacts (via C-terminus) with TMEM131 (via PapD-L domain); the interaction is direct and is involved in assembly and TRAPPIII ER-to-Golgi transport complex-dependent secretion of collagen. Prolines at the third position of the tripeptide repeating unit (G-X-Y) are hydroxylated in some or all of the chains. Expressed in bones.

The protein localises to the secreted. It localises to the extracellular space. The protein resides in the extracellular matrix. Its function is as follows. Type I collagen is a member of group I collagen (fibrillar forming collagen). The sequence is that of Collagen alpha-2(I) chain from Doedicurus sp. (South American giant glyptodont).